A 199-amino-acid polypeptide reads, in one-letter code: Inosine triphosphate pyrophosphatase (199 aa).

Residue 12 to 17 (TGNAKK) participates in ITP binding. Glu-42 provides a ligand contact to Mg(2+). ITP contacts are provided by residues Lys-54, 70-71 (DT), Lys-87, 146-149 (FGWD), Lys-169, and 174-175 (HR).

The protein belongs to the HAM1 NTPase family. As to quaternary structure, homodimer. The cofactor is Mg(2+). Requires Mn(2+) as cofactor.

The protein localises to the cytoplasm. The catalysed reaction is ITP + H2O = IMP + diphosphate + H(+). It catalyses the reaction dITP + H2O = dIMP + diphosphate + H(+). The enzyme catalyses XTP + H2O = XMP + diphosphate + H(+). In terms of biological role, pyrophosphatase that hydrolyzes non-canonical purine nucleotides such as inosine triphosphate (ITP), deoxyinosine triphosphate (dITP) or xanthosine 5'-triphosphate (XTP) to their respective monophosphate derivatives. The enzyme does not distinguish between the deoxy- and ribose forms. Probably excludes non-canonical purines from RNA and DNA precursor pools, thus preventing their incorporation into RNA and DNA and avoiding chromosomal lesions. This chain is Inosine triphosphate pyrophosphatase, found in Monosiga brevicollis (Choanoflagellate).